The following is a 115-amino-acid chain: Somatostatin-1 (115 aa).

The first 24 residues, 1 to 24 (MQSCRVQCALTLLSLALAINSISA), serve as a signal peptide directing secretion. A propeptide spanning residues 25 to 99 (APTDPRLRQF…NSSPALAPRE (75 aa)) is cleaved from the precursor. Positions 60–79 (SQTDNEALESDDLPRGAEQD) are disordered. An intrachain disulfide couples C104 to C115.

It belongs to the somatostatin family.

The protein localises to the secreted. Functionally, somatostatin inhibits the release of somatotropin. In Pelophylax ridibundus (Marsh frog), this protein is Somatostatin-1 (sst1).